The sequence spans 88 residues: Large ribosomal subunit protein bL27 (88 aa).

Residues 1–24 are disordered; it reads MATKKSGGSSGNGRDSRGRRLGVK.

Belongs to the bacterial ribosomal protein bL27 family.

The chain is Large ribosomal subunit protein bL27 from Ehrlichia chaffeensis (strain ATCC CRL-10679 / Arkansas).